A 338-amino-acid polypeptide reads, in one-letter code: Fructose-1,6-bisphosphatase class 1 (338 aa).

Positions 92, 115, 117, and 118 each coordinate Mg(2+). Residues 118-121, Asn-211, Tyr-244, and Lys-274 contribute to the substrate site; that span reads DGSS. A Mg(2+)-binding site is contributed by Glu-280.

It belongs to the FBPase class 1 family. In terms of assembly, homotetramer. Mg(2+) serves as cofactor.

Its subcellular location is the cytoplasm. The enzyme catalyses beta-D-fructose 1,6-bisphosphate + H2O = beta-D-fructose 6-phosphate + phosphate. It participates in carbohydrate biosynthesis; gluconeogenesis. This chain is Fructose-1,6-bisphosphatase class 1, found in Photobacterium profundum (strain SS9).